The following is a 439-amino-acid chain: Probable tRNA pseudouridine synthase D (439 aa).

The Nucleophile role is filled by Asp87. Residues 166 to 391 form the TRUD domain; that stretch reads GVPNFFGIQR…SKGLRREILL (226 aa).

This sequence belongs to the pseudouridine synthase TruD family.

The enzyme catalyses uridine(13) in tRNA = pseudouridine(13) in tRNA. Its function is as follows. Could be responsible for synthesis of pseudouridine from uracil-13 in transfer RNAs. This chain is Probable tRNA pseudouridine synthase D, found in Methanococcoides burtonii (strain DSM 6242 / NBRC 107633 / OCM 468 / ACE-M).